The following is a 78-amino-acid chain: Conotoxin Cal6.3a (78 aa).

The first 21 residues, 1–21 (MRFLHFLIVAVLLASFMESGA), serve as a signal peptide directing secretion. The propeptide occupies 22-26 (MPRNP). Intrachain disulfides connect cysteine 38–cysteine 49, cysteine 41–cysteine 53, and cysteine 48–cysteine 56. Glutamine 76 is modified (glutamine amide).

Expressed by the venom duct.

It is found in the secreted. Probable neurotoxin with unknown target. Possibly targets ion channels. This chain is Conotoxin Cal6.3a, found in Californiconus californicus (California cone).